Here is a 164-residue protein sequence, read N- to C-terminus: MKILQYALLACLLVSILGDDDDEENEGAAGSDDAGATPTALSKPAATSAEGNTAAKNSGGDIKQPKQELPEPSSKGQKKPRLPKRCLFKPEQGNCAGSRFLPRWWYNPETESCEPFTYPVCNKKNEAFVSCTLCMNMCMRNKRGREKAKWIRKVCRKSPKVKSG.

An N-terminal signal peptide occupies residues 1–18 (MKILQYALLACLLVSILG). Positions 20-84 (DDDEENEGAA…KGQKKPRLPK (65 aa)) are disordered. A compositionally biased stretch (low complexity) spans 27–36 (GAAGSDDAGA). The BPTI/Kunitz inhibitor domain maps to 86 to 138 (CLFKPEQGNCAGSRFLPRWWYNPETESCEPFTYPVCNKKNEAFVSCTLCMNMC). 4 disulfides stabilise this stretch: Cys86–Cys138, Cys95–Cys121, Cys113–Cys134, and Cys131–Cys155.

Expressed in salivary glands.

Its subcellular location is the secreted. Functionally, anticoagulant protein that may inhibit serine proteases. The anticoagulant effect of this recombinant protein on blood clotting is found both in the recalcification time (RT) and the activated partial thromboplastin time (APTT) tests, indicating it acts in the common pathway of blood coagulation. The polypeptide is Anticoagulant protein rhipilin-1 (Rhipicephalus haemaphysaloides (Tick)).